The following is a 436-amino-acid chain: Trigger factor (436 aa).

Positions G164–P249 constitute a PPIase FKBP-type domain.

Belongs to the FKBP-type PPIase family. Tig subfamily.

The protein resides in the cytoplasm. The catalysed reaction is [protein]-peptidylproline (omega=180) = [protein]-peptidylproline (omega=0). Its function is as follows. Involved in protein export. Acts as a chaperone by maintaining the newly synthesized protein in an open conformation. Functions as a peptidyl-prolyl cis-trans isomerase. In Ligilactobacillus salivarius (strain UCC118) (Lactobacillus salivarius), this protein is Trigger factor.